Reading from the N-terminus, the 597-residue chain is Sialic acid-binding Ig-like lectin 12 (597 aa).

The first 20 residues, 1–20 (MLLLLLLLLLPPLLCGRVGA), serve as a signal peptide directing secretion. Ig-like V-type domains are found at residues 21-144 (KEQK…VNVT) and 145-271 (ASQD…VHVT). Residues 21–483 (KEQKDYLLTM…RPISGVTLGA (463 aa)) lie on the Extracellular side of the membrane. Residues cysteine 46 and cysteine 106 are joined by a disulfide bond. N-linked (GlcNAc...) asparagine glycosylation is found at asparagine 142, asparagine 181, asparagine 232, and asparagine 292. 3 cysteine pairs are disulfide-bonded: cysteine 168–cysteine 301, cysteine 173–cysteine 233, and cysteine 295–cysteine 344. Residues 277–360 (PTFSIPGTLE…AGVTTTRAVR (84 aa)) enclose the Ig-like C2-type 1 domain. N-linked (GlcNAc...) asparagine glycosylation is found at asparagine 362, asparagine 369, and asparagine 387. The region spanning 367–464 (PQNLTMTVFQ…GSQHISLSLS (98 aa)) is the Ig-like C2-type 2 domain. The cysteines at positions 403 and 448 are disulfide-linked. A helical transmembrane segment spans residues 484–504 (VGGAGATALVFLSFCIIFVVV). Residues 505-597 (RSCRKKSARP…YEYSEINILK (93 aa)) lie on the Cytoplasmic side of the membrane. Residues 514-558 (PAVGVGDTGMEDTNAVRGSASQGPLIESPADDSPPHHAPPALATP) form a disordered region. The ITIM motif motif lies at 565–570 (IQYASL). Phosphotyrosine is present on residues tyrosine 567 and tyrosine 590. Positions 588 to 593 (YEYSEI) match the SLAM-like motif motif.

This sequence belongs to the immunoglobulin superfamily. SIGLEC (sialic acid binding Ig-like lectin) family.

The protein localises to the membrane. Putative adhesion molecule that mediates sialic-acid dependent binding to cells. The sialic acid recognition site may be masked by cis interactions with sialic acids on the same cell surface. The polypeptide is Sialic acid-binding Ig-like lectin 12 (SIGLEC12) (Pan troglodytes (Chimpanzee)).